The sequence spans 118 residues: Myotrophin (118 aa).

ANK repeat units follow at residues 1–30 (MGDK…DVNR), 34–65 (GGRK…NAAD), and 67–98 (HGIT…TVKG).

This sequence belongs to the myotrophin family.

It localises to the cytoplasm. The protein localises to the nucleus. It is found in the perinuclear region. In terms of biological role, regulates NF-kappa-B transcription factor activity. Promotes growth of cardiomyocytes, but not cardiomyocyte proliferation. Promotes cardiac muscle hypertrophy. Plays a role in the regulation of the growth of actin filaments. Inhibits the activity of the F-actin-capping protein complex. The chain is Myotrophin (mtpn) from Xenopus tropicalis (Western clawed frog).